A 221-amino-acid polypeptide reads, in one-letter code: Ras-related protein RabS (221 aa).

16-23 (GDNQCGKS) lines the GTP pocket. The short motif at 38 to 47 (GIQLWHGIEI) is the Effector region element. Residues 71–75 (DGNGG) and 137–140 (NKCD) each bind GTP. Cysteine methyl ester is present on cysteine 218. The S-geranylgeranyl cysteine moiety is linked to residue cysteine 218. Positions 219 to 221 (IIN) are cleaved as a propeptide — removed in mature form.

The protein belongs to the small GTPase superfamily. Rab family.

The protein localises to the cell membrane. In Dictyostelium discoideum (Social amoeba), this protein is Ras-related protein RabS (rabS).